The following is a 130-amino-acid chain: Methylglyoxal synthase (130 aa).

An MGS-like domain is found at 1 to 130 (MSKPRIALIA…DLARTMQDVC (130 aa)). Substrate is bound by residues His-11, Lys-15, 37 to 40 (TGTT), and 57 to 58 (SG). Asp-63 (proton donor/acceptor) is an active-site residue. His-90 contacts substrate.

The protein belongs to the methylglyoxal synthase family.

It carries out the reaction dihydroxyacetone phosphate = methylglyoxal + phosphate. Catalyzes the formation of methylglyoxal from dihydroxyacetone phosphate. The protein is Methylglyoxal synthase of Burkholderia multivorans (strain ATCC 17616 / 249).